Consider the following 582-residue polypeptide: Vesicular glutamate transporter 2 (582 aa).

Residues 1–71 are Cytoplasmic-facing; it reads MESVKQRILA…CTCFGLPRRY (71 aa). The chain crosses the membrane as a helical span at residues 72 to 92; it reads IIAIMSGLGFCISFGIRCNLG. Residues 93 to 125 are Vesicular-facing; sequence VAIVDMVNNSTIHRGGKVIKEKAKFNWDPETVG. N-linked (GlcNAc...) asparagine glycosylation is found at N100 and N101. The helical transmembrane segment at 126 to 146 threads the bilayer; the sequence is MIHGSFFWGYIITQIPGGYIA. Residues 147–148 lie on the Cytoplasmic side of the membrane; the sequence is SR. A helical transmembrane segment spans residues 149 to 169; sequence LAANRVFGAAILLTSTLNMLI. Topologically, residues 170-177 are vesicular; that stretch reads PSAARVHY. Residues 178–198 traverse the membrane as a helical segment; the sequence is GCVIFVRILQGLVEGVTYPAC. The Cytoplasmic portion of the chain corresponds to 199–216; it reads HGIWSKWAPPLERSRLAT. Residues 217–237 traverse the membrane as a helical segment; the sequence is TSFCGSYAGAVIAMPLAGILV. At 238-244 the chain is on the vesicular side; it reads QYTGWSS. Residues 245-265 traverse the membrane as a helical segment; it reads VFYVYGSFGMVWYMFWLLVSY. At 266–310 the chain is on the cytoplasmic side; sequence ESPAKHPTITDEERRYIEESIGESANLLGAMEKFKTPWRKFFTSM. The helical transmembrane segment at 311–331 threads the bilayer; the sequence is PVYAIIVANFCRSWTFYLLLI. Residues 332-349 lie on the Vesicular side of the membrane; sequence SQPAYFEEVFGFEISKVG. Residues 350-370 form a helical membrane-spanning segment; sequence MLSAVPHLVMTIIVPIGGQIA. Residues 371–386 lie on the Cytoplasmic side of the membrane; the sequence is DFLRSKQILSTTTVRK. The helical transmembrane segment at 387 to 407 threads the bilayer; it reads IMNCGGFGMEATLLLVVGYSH. Residues 408–409 are Vesicular-facing; it reads TR. Residues 410-430 traverse the membrane as a helical segment; it reads GVAISFLVLAVGFSGFAISGF. At 431 to 443 the chain is on the cytoplasmic side; sequence NVNHLDIAPRYAS. The chain crosses the membrane as a helical span at residues 444 to 464; it reads ILMGISDGVGTLSGMVCPIIV. Residues 465–477 lie on the Vesicular side of the membrane; that stretch reads GAMTKNKSREEWQ. A glycan (N-linked (GlcNAc...) asparagine) is linked at N470. The helical transmembrane segment at 478–498 threads the bilayer; sequence YVFLIAALVHYGGVIFYALFA. Residues 499–582 are Cytoplasmic-facing; it reads SGEKQPWADP…YTYKDRDDYS (84 aa).

It belongs to the major facilitator superfamily. Sodium/anion cotransporter family. VGLUT subfamily. In terms of tissue distribution, expressed in brain. Expressed in hippocampal neurons (at protein level).

Its subcellular location is the cytoplasmic vesicle. The protein localises to the secretory vesicle. The protein resides in the synaptic vesicle membrane. It localises to the synapse. It is found in the synaptosome. Its subcellular location is the cell membrane. The catalysed reaction is L-glutamate(out) = L-glutamate(in). The enzyme catalyses K(+)(in) + H(+)(out) = K(+)(out) + H(+)(in). It catalyses the reaction 3 Na(+)(out) + phosphate(out) = 3 Na(+)(in) + phosphate(in). It carries out the reaction phosphate(in) = phosphate(out). The catalysed reaction is chloride(in) = chloride(out). With respect to regulation, chloride channel activity is allosterically activated by lumenal H(+) and Cl(-) leading to synaptic vesicles acidification. The L-glutamate transport activity is allosterically activated by lumenal H(+) and Cl(-). The allosteric requirement for H(+) efficiently prevents non-vesicular efflux across the plasma membrane. The L-glutamate uniporter activity exhibits a biphasic dependence on chloride concentration. Functionally, multifunctional transporter that transports L-glutamate as well as multiple ions such as chloride, proton, potassium, sodium and phosphate. At the synaptic vesicle membrane, mainly functions as a uniporter which transports preferentially L-glutamate but also, phosphate from the cytoplasm into synaptic vesicles at presynaptic nerve terminals of excitatory neural cells. The L-glutamate or phosphate uniporter activity is electrogenic and is driven by the proton electrochemical gradient, mainly by the electrical gradient established by the vacuolar H(+)-ATPase across the synaptic vesicle membrane. In addition, functions as a chloride channel that allows a chloride permeation through the synaptic vesicle membrane therefore affects the proton electrochemical gradient and promotes synaptic vesicles acidification. Moreover, functions as a vesicular K(+)/H(+) antiport allowing to maintain the electrical gradient and to decrease chemical gradient and therefore sustain vesicular glutamate uptake. The vesicular H(+)/H(+) antiport activity is electroneutral. At the plasma membrane, following exocytosis, functions as a symporter of Na(+) and phosphate from the extracellular space to the cytoplasm allowing synaptic phosphate homeostasis regulation. The symporter activity is driven by an inside negative membrane potential and is electrogenic. Also involved in the regulation of retinal hyaloid vessel regression during postnatal development. May also play a role in the endocrine glutamatergic system of other tissues such as pineal gland and pancreas. The protein is Vesicular glutamate transporter 2 of Mus musculus (Mouse).